The chain runs to 120 residues: Fluoride-specific ion channel FluC 1 (120 aa).

2 consecutive transmembrane segments (helical) span residues 3-23 and 42-62; these read ALLT…LNCA and LGCL…VAAL. Gly-69 and Thr-72 together coordinate Na(+). The helical transmembrane segment at 99-119 threads the bilayer; that stretch reads ANLAAGVGAAVLGMAAVGWFL.

This sequence belongs to the fluoride channel Fluc/FEX (TC 1.A.43) family.

It is found in the cell membrane. The enzyme catalyses fluoride(in) = fluoride(out). Na(+) is not transported, but it plays an essential structural role and its presence is essential for fluoride channel function. Functionally, fluoride-specific ion channel. Important for reducing fluoride concentration in the cell, thus reducing its toxicity. The protein is Fluoride-specific ion channel FluC 1 of Thermobifida fusca (strain YX).